Here is a 475-residue protein sequence, read N- to C-terminus: Aspartate ammonia-lyase (475 aa).

Residues Thr104, Ser143, Thr144, Asn145, Thr190, and His191 each contribute to the L-aspartate site. The interval 320 to 329 (GSSIMPGKVN) is SS loop. Ser321 functions as the Proton acceptor in the catalytic mechanism. L-aspartate is bound by residues Ser322 and Lys327.

Belongs to the class-II fumarase/aspartase family. Aspartase subfamily. Homotetramer.

The enzyme catalyses L-aspartate = fumarate + NH4(+). In terms of biological role, catalyzes the reversible conversion of L-aspartate to fumarate and ammonia. The chain is Aspartate ammonia-lyase from Bacillus subtilis (strain 168).